The sequence spans 214 residues: tRNA (guanine-N(7)-)-methyltransferase (214 aa).

S-adenosyl-L-methionine contacts are provided by Asp35, Glu60, Asn87, and Asp113. Asp113 is a catalytic residue. Substrate is bound by residues Lys117 and Asp149.

It belongs to the class I-like SAM-binding methyltransferase superfamily. TrmB family.

The catalysed reaction is guanosine(46) in tRNA + S-adenosyl-L-methionine = N(7)-methylguanosine(46) in tRNA + S-adenosyl-L-homocysteine. It participates in tRNA modification; N(7)-methylguanine-tRNA biosynthesis. Functionally, catalyzes the formation of N(7)-methylguanine at position 46 (m7G46) in tRNA. The chain is tRNA (guanine-N(7)-)-methyltransferase from Prochlorococcus marinus (strain NATL1A).